A 393-amino-acid polypeptide reads, in one-letter code: NAD(P)H-quinone oxidoreductase subunit H, chloroplastic (393 aa).

The protein belongs to the complex I 49 kDa subunit family. As to quaternary structure, NDH is composed of at least 16 different subunits, 5 of which are encoded in the nucleus.

It is found in the plastid. The protein resides in the chloroplast thylakoid membrane. It catalyses the reaction a plastoquinone + NADH + (n+1) H(+)(in) = a plastoquinol + NAD(+) + n H(+)(out). The enzyme catalyses a plastoquinone + NADPH + (n+1) H(+)(in) = a plastoquinol + NADP(+) + n H(+)(out). In terms of biological role, NDH shuttles electrons from NAD(P)H:plastoquinone, via FMN and iron-sulfur (Fe-S) centers, to quinones in the photosynthetic chain and possibly in a chloroplast respiratory chain. The immediate electron acceptor for the enzyme in this species is believed to be plastoquinone. Couples the redox reaction to proton translocation, and thus conserves the redox energy in a proton gradient. This Oenothera argillicola (Appalachian evening primrose) protein is NAD(P)H-quinone oxidoreductase subunit H, chloroplastic.